The chain runs to 1090 residues: MSVYHLPTLLNPLVNAIFNCPEPERSPLKKLFANLKTRRFILLAPPSEYLLNYHDVKSKLPLHDLCYNAEFINSYILLMTENSYINTNSRDSHYETLDGKTVVIQWKNNVIHALNGFHIRRRLKILETKILPNFNDYFEGAADFIILFIDQPLNCEFVPNDYLQCFHNYEKIPKNAHAMPNLSIDSFQQERSSFENILHIHPARLTQLGQLFSSYRTLAPGDDPSRSIFESIVQQAFDGMKSDSLFKNFSNLYDLIHDYFELNLYDDIWSRLTTHFKGHEVDTEKYKYFSVNQLLTDFYSKDYGEFKLHDITLIERRLHLASKHLQKLALTHSYAEKSKILVETLQKLSGTTEMDSHQLELPDGLNNMTMDADTLISLFVLVVCRSEQKHLKSHLYYLQNFSNNSSSTKFGILGYAVSTLEAVVCYFEDFNKNTGNVAKANTLCEKTKNLLDKLSCENPTNEVEDLATYKDILTYRNEQGQSIPSICITNHKNYILLDILSEYENDFPVEDLLEDETIDGSTLLIESIKAGNLEAAKVLIKIMLFNCTEEELVSYINKTDKYARTVAHYLTHEMDILKSIGNYIDWKRKNSSGQTPLFSIFRSYDQPNYEEMVKTAFDIANTWYRKHNSLFDYLDHTDNKGNSLLHVLKTNIPILLQLTKLDINEENYKGLTPLMVYVKYKRLSNIDAITKDRRLILEKVQNSTFFTCFDYAKDHSVLSKIGERGVKDSLFGLIYFHSLRYHNLNATTNITSVSNAEKPFATTVINMKTIQGLLRSILKDNPFTFLPLNTYIDEISHLNRSDLTIIGKTDVTSLLHQLTNCFNVLLFLKKIPENLFTDEASILYWMRINTSKRNQKPSGKENPKTMEPEEINMIQSFLRFNFDEISSFKASLNILRKVLIFINLKSDDFEDAYKGLNEMGRKLINSEASSAFKGIITNHNMFSELSLAELLENVRFLEQCTIQLSSFVQIILFEKIPNWWKHYGEFLALHKSYRKAFPNMVKPKSASDTSSRAPLGGFIETKREQSEQRLAVQIKASSKMLKELGSEIFVAHERLAEELSNYMEFRKACLDQRSLVAFATTNISVLQECV.

A VPS9 domain is found at 289 to 436 (FSVNQLLTDF…FEDFNKNTGN (148 aa)).

It belongs to the UPF0507 family.

The chain is UPF0507 protein C1Q_01007 from Saccharomyces cerevisiae (strain JAY291) (Baker's yeast).